Consider the following 233-residue polypeptide: Large ribosomal subunit protein eL6z (233 aa).

Residues 175–195 (EFFEAEKEEKKEIPQEKKEDQ) are disordered.

This sequence belongs to the eukaryotic ribosomal protein eL6 family.

This chain is Large ribosomal subunit protein eL6z (RPL6A), found in Arabidopsis thaliana (Mouse-ear cress).